Consider the following 167-residue polypeptide: Caltractin (167 aa).

The span at 1-18 (MSSARTVRKDKPRGRHHG) shows a compositional bias: basic residues. The segment at 1–23 (MSSARTVRKDKPRGRHHGLTQQK) is disordered. 4 consecutive EF-hand domains span residues 22-57 (QKRQ…LGFE), 58-93 (MTEE…KIGE), 95-130 (DTKE…LGEN), and 131-166 (FTVK…TSYA). Residues aspartate 35, aspartate 37, serine 39, threonine 41, glutamate 46, aspartate 71, aspartate 73, serine 75, glutamate 82, aspartate 108, aspartate 110, asparagine 112, lysine 114, aspartate 119, aspartate 144, aspartate 146, aspartate 148, glutamate 150, and glutamate 155 each coordinate Ca(2+).

Belongs to the centrin family.

The protein localises to the cytoplasm. Its subcellular location is the cytoskeleton. It is found in the microtubule organizing center. Plays a fundamental role in microtubule-organizing center structure and function. This chain is Caltractin, found in Atriplex nummularia (Old man saltbush).